The primary structure comprises 156 residues: Small ribosomal subunit protein uS7 (156 aa).

It belongs to the universal ribosomal protein uS7 family. Part of the 30S ribosomal subunit. Contacts proteins S9 and S11.

Its function is as follows. One of the primary rRNA binding proteins, it binds directly to 16S rRNA where it nucleates assembly of the head domain of the 30S subunit. Is located at the subunit interface close to the decoding center, probably blocks exit of the E-site tRNA. The sequence is that of Small ribosomal subunit protein uS7 from Saccharophagus degradans (strain 2-40 / ATCC 43961 / DSM 17024).